We begin with the raw amino-acid sequence, 109 residues long: Putative ankyrin repeat protein L482 (109 aa).

4 ANK repeats span residues 1 to 26 (YLTEISGKGHIEIVKCLVNLGANITT), 27 to 56 (NNNYAIIQASEKGHLEVVKYLVGQNANIRS), 57 to 86 (ENNLAVRLASGNGHLEVVEYLVNLGADIRS), and 88 to 109 (NNYAIQSASQNGHLEVIEYLVA).

The polypeptide is Putative ankyrin repeat protein L482 (Acanthamoeba polyphaga (Amoeba)).